The chain runs to 30 residues: Vitri peptide A (30 aa).

Positions 1–30 (GIPCGESCVWIPCITSAIGCSCKSKVCYRN) form a cross-link, cyclopeptide (Gly-Asn). Cystine bridges form between C4-C20, C8-C22, and C13-C27.

This is a cyclic peptide.

Functionally, probably participates in a plant defense mechanism. Has strong cytotoxic activity against human lymphoma U-937 GTB and human myeloma RPMI-8226/s cell lines. The protein is Vitri peptide A of Viola arvensis (European field pansy).